Reading from the N-terminus, the 776-residue chain is Disintegrin and metalloproteinase domain-containing protein 28 (776 aa).

An N-terminal signal peptide occupies residues 1 to 19 (MLQALLTVSLLLSPVPVSA). Residues 20 to 193 (IKELPGVKKY…IARPATRLVK (174 aa)) constitute a propeptide that is removed on maturation. Positions 168 to 175 (STCGTDGV) match the Cysteine switch motif. Cys170 lines the Zn(2+) pocket. The Extracellular portion of the chain corresponds to 194–666 (LNDGKVQKHE…CDDSSVVFYF (473 aa)). In terms of domain architecture, Peptidase M12B spans 204–400 (KYIEYYLVLD…KLSNCLFNAP (197 aa)). Asn268 and Asn275 each carry an N-linked (GlcNAc...) asparagine glycan. 4 cysteine pairs are disulfide-bonded: Cys315–Cys395, Cys355–Cys379, Cys357–Cys362, and Cys466–Cys486. His340 provides a ligand contact to Zn(2+). Residue Glu341 is part of the active site. Zn(2+)-binding residues include His344 and His350. N-linked (GlcNAc...) asparagine glycosylation is present at Asn352. A Disintegrin domain is found at 408–494 (TPICGNQMVE…NCPDDRFRAN (87 aa)). Residues Asn558, Asn603, and Asn629 are each glycosylated (N-linked (GlcNAc...) asparagine). One can recognise an EGF-like domain in the interval 626 to 658 (KSTNCSSKCKGHAVCDHELQCQCEEGWSPPDCD). 3 disulfides stabilise this stretch: Cys630/Cys640, Cys634/Cys646, and Cys648/Cys657. Residues 667 to 687 (SIVVAVLFPVAVISLVVAIVI) traverse the membrane as a helical segment. The Cytoplasmic segment spans residues 688-776 (RQQSSREKQK…SSFLDSNPKA (89 aa)). The span at 691–701 (SSREKQKKDQR) shows a compositional bias: basic and acidic residues. 2 disordered regions span residues 691–728 (SSREKQKKDQRPLSTTGTRPHKQKRKPQMVKAVQPQEM) and 746–776 (PASFLISKPDFSPPPIPAPRSSSFLDSNPKA). A compositionally biased stretch (basic residues) spans 709-718 (RPHKQKRKPQ).

Zn(2+) serves as cofactor. Pro-domain removal and maturation may be, at least in part, autocatalytic. Expressed at high levels in epididymis and at lower levels in lung.

Its subcellular location is the membrane. May play a role in the adhesive and proteolytic events that occur during lymphocyte emigration or may function in ectodomain shedding of lymphocyte surface target proteins, such as FASL and CD40L. May be involved in sperm maturation. This Macaca fascicularis (Crab-eating macaque) protein is Disintegrin and metalloproteinase domain-containing protein 28 (ADAM28).